Here is a 124-residue protein sequence, read N- to C-terminus: Small ribosomal subunit protein uS12c (124 aa).

Disordered stretches follow at residues 1 to 28 (MPTIQQLVRSERRKINKKTKSPALKSCP) and 104 to 124 (AAGVKDRRKSRSKYGTKKPKS). Composition is skewed to basic residues over residues 11-20 (ERRKINKKTK) and 109-124 (DRRKSRSKYGTKKPKS).

It belongs to the universal ribosomal protein uS12 family. Part of the 30S ribosomal subunit.

Its subcellular location is the plastid. It localises to the chloroplast. With S4 and S5 plays an important role in translational accuracy. Located at the interface of the 30S and 50S subunits. This is Small ribosomal subunit protein uS12c (rps12) from Porphyra purpurea (Red seaweed).